We begin with the raw amino-acid sequence, 333 residues long: Squamosa promoter-binding-like protein 8 (333 aa).

The segment at 1 to 28 (MLDYEWDNPSSIVLSGDERNPDSDPTRS) is disordered. Residues 16 to 25 (GDERNPDSDP) show a composition bias toward basic and acidic residues. Residues 179–269 (MANSLSTPRC…RKCHQSASAT (91 aa)) are sufficient and necessary for DNA binding. Residues 185-262 (TPRCQAEGCN…ADHNRRRRKC (78 aa)) form an SBP-type zinc finger. The Zn(2+) site is built by Cys-188, Cys-193, Cys-210, His-213, Cys-229, Cys-232, His-236, and Cys-248. A Bipartite nuclear localization signal motif is present at residues 245–261 (KRSCRKRLADHNRRRRK). 2 disordered regions span residues 254–303 (DHNR…TISL) and 314–333 (TASS…FSSG). Positions 264–284 (QSASATQDTGTGKTTPKSPND) are enriched in polar residues. Low complexity predominate over residues 289–299 (ASSSPSSNAPP).

Zn(2+) is required as a cofactor. As to expression, expressed in shoot apical region and early floral tissues. Transcripts levels increase in developing pollen sacs, and decrease in later stage of anther development. Strongly expressed in the placental region of the carpels.

It is found in the nucleus. It localises to the cytoplasm. Its function is as follows. Trans-acting factor that binds specifically to the consensus nucleotide sequence 5'-TNCGTACAA-3'. Binds specifically to the 5'-GTAC-3' core sequence. Involved in development and floral organogenesis. Required for ovule differentiation, pollen production, filament elongation, seed formation and siliques elongation. Also seems to play a role in the formation of trichomes on sepals. May positively modulate gibberellin (GA) signaling in flower. The polypeptide is Squamosa promoter-binding-like protein 8 (SPL8) (Arabidopsis thaliana (Mouse-ear cress)).